The sequence spans 114 residues: Mediator of RNA polymerase II transcription subunit 11 (114 aa).

The stretch at 28–61 forms a coiled coil; sequence LELSKEKANASLLDRQLNQFQTSINRVESELSSQ.

Belongs to the Mediator complex subunit 11 family. Component of the Mediator complex. In terms of tissue distribution, ubiquitously expressed at early stage of development. After fertilization expressed in head region as well as in lateral line primordium.

Its subcellular location is the nucleus. Functionally, component of the Mediator complex, a coactivator involved in the regulated transcription of nearly all RNA polymerase II-dependent genes. Mediator functions as a bridge to convey information from gene-specific regulatory proteins to the basal RNA polymerase II transcription machinery. Mediator is recruited to promoters by direct interactions with regulatory proteins and serves as a scaffold for the assembly of a functional pre-initiation complex with RNA polymerase II and the general transcription factors. The polypeptide is Mediator of RNA polymerase II transcription subunit 11 (med11) (Danio rerio (Zebrafish)).